We begin with the raw amino-acid sequence, 267 residues long: MDTAIDLSDASKALDLANIRFQLIRLEDTITFHLIERVQFPLNKTIYIPGGVKIPNEQISLMDYLLRETERLQSRVRRYQSPDEYPFFPSALEKPILQPLDYPKILHDNDVNVNETIKTRYVQDILPAICPQFGGREDRGETQENYGSAATCDVSCLQALSRRIHFGKFVAESKFQKETEKFVALIKAGDRKEIDEAITDAKVEQKVLERLALKAKTYGTDPGFPEQSGPKIDVQAVQDMYKEYVIPLTKVVEVEYLMQRLKGTQWE.

In terms of domain architecture, Chorismate mutase spans 7–262; the sequence is LSDASKALDL…EVEYLMQRLK (256 aa). L-tyrosine is bound by residues Arg-77, Arg-78, Asn-145, Gly-147, Ser-148, and Thr-151. L-tryptophan is bound by residues Asn-145, Gly-147, and Ser-148.

Homodimer.

The protein localises to the cytoplasm. It catalyses the reaction chorismate = prephenate. It functions in the pathway metabolic intermediate biosynthesis; prephenate biosynthesis; prephenate from chorismate: step 1/1. Each dimer has two allosteric binding sites that can bind the regulatory effectors tryptophan or tyrosine. Can bind either one tryptophan or one tyrosine, two tryptophan or two tyrosine or one tryptophan and one tyrosine, which differentially affect the catalytic activity. Activated by tryptophan and subject to feedback inhibition by tyrosine. In the presence of both tryptophan and tyrosine, the enzyme is in the activated state. Functionally, catalyzes the Claisen rearrangement of chorismate to prephenate. Acts at the first branch point in the aromatic amino acid pathway where it steers biosynthesis towards phenylalanine and tyrosine, and away from tryptophan. This Emericella nidulans (strain FGSC A4 / ATCC 38163 / CBS 112.46 / NRRL 194 / M139) (Aspergillus nidulans) protein is Chorismate mutase.